Reading from the N-terminus, the 172-residue chain is RTX-I toxin-activating lysine-acyltransferase ApxIC (172 aa).

Residues H24 and D93 contribute to the active site.

This sequence belongs to the RTX toxin acyltransferase family. In terms of assembly, homodimer.

The protein localises to the cytoplasm. It carries out the reaction a fatty acyl-[ACP] + L-lysyl-[protein] = N(6)-(fatty acyl)-L-lysyl-[protein] + holo-[ACP] + H(+). Protein-lysine acyltransferase that catalyzes fatty acylation of the protoxin, thereby converting it to the active toxin. In Actinobacillus pleuropneumoniae (Haemophilus pleuropneumoniae), this protein is RTX-I toxin-activating lysine-acyltransferase ApxIC.